Here is a 441-residue protein sequence, read N- to C-terminus: ATP-dependent protease ATPase subunit HslU (441 aa).

Residues valine 18, 60–65, aspartate 253, glutamate 319, and arginine 391 each bind ATP; that span reads GVGKTE.

It belongs to the ClpX chaperone family. HslU subfamily. As to quaternary structure, a double ring-shaped homohexamer of HslV is capped on each side by a ring-shaped HslU homohexamer. The assembly of the HslU/HslV complex is dependent on binding of ATP.

It localises to the cytoplasm. ATPase subunit of a proteasome-like degradation complex; this subunit has chaperone activity. The binding of ATP and its subsequent hydrolysis by HslU are essential for unfolding of protein substrates subsequently hydrolyzed by HslV. HslU recognizes the N-terminal part of its protein substrates and unfolds these before they are guided to HslV for hydrolysis. The sequence is that of ATP-dependent protease ATPase subunit HslU from Nitratidesulfovibrio vulgaris (strain DP4) (Desulfovibrio vulgaris).